The sequence spans 230 residues: Large ribosomal subunit protein uL1 (230 aa).

It belongs to the universal ribosomal protein uL1 family. In terms of assembly, part of the 50S ribosomal subunit.

In terms of biological role, binds directly to 23S rRNA. The L1 stalk is quite mobile in the ribosome, and is involved in E site tRNA release. Functionally, protein L1 is also a translational repressor protein, it controls the translation of the L11 operon by binding to its mRNA. In Nitrobacter winogradskyi (strain ATCC 25391 / DSM 10237 / CIP 104748 / NCIMB 11846 / Nb-255), this protein is Large ribosomal subunit protein uL1.